A 428-amino-acid chain; its full sequence is ATP-dependent RNA helicase RhlB (428 aa).

Positions 9–37 match the Q motif motif; sequence KKFSDFALHPKVIEALDNKGFSNCTPIQA. Residues 40–219 form the Helicase ATP-binding domain; it reads LPFTVEGRDV…FEQMNHAEYI (180 aa). Position 53 to 60 (53 to 60) interacts with ATP; the sequence is AQTGTGKT. The short motif at 165–168 is the DEAD box element; that stretch reads DEAD. The 146-residue stretch at 245–390 folds into the Helicase C-terminal domain; that stretch reads RLLQTLLEEE…VSKYNSQALL (146 aa). The disordered stretch occupies residues 392–428; that stretch reads DLPAPKRRYRSRSGNHQRRNNLSHRNNTPRNNRKRSG. Over residues 396-413 the composition is skewed to basic residues; the sequence is PKRRYRSRSGNHQRRNNL.

This sequence belongs to the DEAD box helicase family. RhlB subfamily. Component of the RNA degradosome, which is a multiprotein complex involved in RNA processing and mRNA degradation.

Its subcellular location is the cytoplasm. The catalysed reaction is ATP + H2O = ADP + phosphate + H(+). DEAD-box RNA helicase involved in RNA degradation. Has RNA-dependent ATPase activity and unwinds double-stranded RNA. The chain is ATP-dependent RNA helicase RhlB from Photorhabdus laumondii subsp. laumondii (strain DSM 15139 / CIP 105565 / TT01) (Photorhabdus luminescens subsp. laumondii).